The primary structure comprises 372 residues: MAKAPAVGIDLGTTYSCVGVFQHGKVEIIANDQGNRTTPSYVAFTDTERLIGDAAKNKTASNPYRSLDAKRLIGRNFSDTNVKADMKHWPFTVIEEGGRPKIKIEFKGESKTFYAEEISSMVLLKMKETAEAYLGKESVTDAVVTVPAYFNDSQRQATKECGVISGMNILRIINEPTAAAIAYGLDKKGGAERNVLIFDLVGGTFDVSVLTIEEGIFEVKSTSRDTHLGGEDFDNRMVTHSSPEFKRKHKKDITPNKRAVRRLRTACERAKRTLSSSTQAKIEIDSLFEGIDYYTSVTRARFEELNSDLFRGTLEPVENALRDAKLDKEKIHEIVLVGGSTRIPKIQKLQDFFHGKELNKSINPDEAVAIVQ.

Belongs to the heat shock protein 70 family.

The chain is Heat shock 70 kDa protein II (HSP70II) from Paracentrotus lividus (Common sea urchin).